Here is a 167-residue protein sequence, read N- to C-terminus: N-alpha-acetyltransferase (167 aa).

In terms of domain architecture, N-acetyltransferase spans 12–167 (YRIRNARLTD…EDAYLMAAPL (156 aa)). A substrate-binding site is contributed by Y37. A Zn(2+)-binding site is contributed by H88. Acetyl-CoA contacts are provided by residues 92-94 (IAV) and 100-105 (RLGIGT). E127 contacts Zn(2+). Residues N132 and 139 to 141 (YKK) each bind acetyl-CoA. Position 154 (Y154) interacts with substrate.

This sequence belongs to the acetyltransferase family. ARD1 subfamily. As to quaternary structure, homodimer.

The protein resides in the cytoplasm. It catalyses the reaction N-terminal L-alanyl-[protein] + acetyl-CoA = N-terminal N(alpha)-acetyl-L-alanyl-[protein] + CoA + H(+). It carries out the reaction N-terminal L-seryl-[protein] + acetyl-CoA = N-terminal N(alpha)-acetyl-L-seryl-[protein] + CoA + H(+). The catalysed reaction is N-terminal L-methionyl-L-leucyl-[protein] + acetyl-CoA = N-terminal N(alpha)-acetyl-L-methionyl-L-leucyl-[protein] + CoA + H(+). The enzyme catalyses N-terminal L-methionyl-L-glutamyl-[protein] + acetyl-CoA = N-terminal N(alpha)-acetyl-L-methionyl-L-glutamyl-[protein] + CoA + H(+). Its function is as follows. Displays alpha (N-terminal) acetyltransferase activity. Catalyzes the covalent attachment of an acetyl moiety from acetyl-CoA to the free alpha-amino group at the N-terminus of a protein. This is N-alpha-acetyltransferase from Sulfurisphaera tokodaii (strain DSM 16993 / JCM 10545 / NBRC 100140 / 7) (Sulfolobus tokodaii).